Here is an 86-residue protein sequence, read N- to C-terminus: Large ribosomal subunit protein uL23 (86 aa).

It belongs to the universal ribosomal protein uL23 family. Part of the 50S ribosomal subunit. Contacts protein L29.

Its function is as follows. Binds to 23S rRNA. One of the proteins that surrounds the polypeptide exit tunnel on the outside of the ribosome. This Pyrococcus furiosus (strain ATCC 43587 / DSM 3638 / JCM 8422 / Vc1) protein is Large ribosomal subunit protein uL23.